Reading from the N-terminus, the 143-residue chain is Hemoglobin cathodic subunit alpha (143 aa).

Serine 2 is subject to N-acetylserine. Residues 2-143 (SLTAKDKSLI…LGAALSDKYR (142 aa)) form the Globin domain. Histidine 60 is an O2 binding site. Position 89 (histidine 89) interacts with heme b.

The protein belongs to the globin family. Heterotetramer of two alpha chains and two beta chains. In terms of tissue distribution, red blood cells.

Functionally, involved in oxygen transport from gills to the various peripheral tissues. This Anguilla anguilla (European freshwater eel) protein is Hemoglobin cathodic subunit alpha.